A 105-amino-acid chain; its full sequence is Dynein axonemal light chain 4 (105 aa).

It belongs to the dynein light chain family. Consists of at least two heavy chains and a number of intermediate and light chains.

Its subcellular location is the cytoplasm. The protein localises to the cytoskeleton. The protein resides in the cilium axoneme. Force generating protein of respiratory cilia. Produces force towards the minus ends of microtubules. Dynein has ATPase activity. This chain is Dynein axonemal light chain 4 (Dnal4), found in Mus musculus (Mouse).